The chain runs to 356 residues: UDP-N-acetylglucosamine--N-acetylmuramyl-(pentapeptide) pyrophosphoryl-undecaprenol N-acetylglucosamine transferase (356 aa).

UDP-N-acetyl-alpha-D-glucosamine contacts are provided by residues 14 to 16 (TGG), asparagine 126, arginine 162, serine 190, isoleucine 244, and glutamine 289.

It belongs to the glycosyltransferase 28 family. MurG subfamily.

The protein resides in the cell inner membrane. It catalyses the reaction di-trans,octa-cis-undecaprenyl diphospho-N-acetyl-alpha-D-muramoyl-L-alanyl-D-glutamyl-meso-2,6-diaminopimeloyl-D-alanyl-D-alanine + UDP-N-acetyl-alpha-D-glucosamine = di-trans,octa-cis-undecaprenyl diphospho-[N-acetyl-alpha-D-glucosaminyl-(1-&gt;4)]-N-acetyl-alpha-D-muramoyl-L-alanyl-D-glutamyl-meso-2,6-diaminopimeloyl-D-alanyl-D-alanine + UDP + H(+). Its pathway is cell wall biogenesis; peptidoglycan biosynthesis. Cell wall formation. Catalyzes the transfer of a GlcNAc subunit on undecaprenyl-pyrophosphoryl-MurNAc-pentapeptide (lipid intermediate I) to form undecaprenyl-pyrophosphoryl-MurNAc-(pentapeptide)GlcNAc (lipid intermediate II). The sequence is that of UDP-N-acetylglucosamine--N-acetylmuramyl-(pentapeptide) pyrophosphoryl-undecaprenol N-acetylglucosamine transferase from Cupriavidus necator (strain ATCC 17699 / DSM 428 / KCTC 22496 / NCIMB 10442 / H16 / Stanier 337) (Ralstonia eutropha).